We begin with the raw amino-acid sequence, 904 residues long: Envelope glycoprotein B (904 aa).

The N-terminal stretch at 1 to 30 is a signal peptide; it reads MHQGAPSWGRRWFVVWALLGLTLGVLVASA. Topologically, residues 31–774 are virion surface; it reads APTSPGTPGV…SGVSSFMSNP (744 aa). Positions 32–52 are enriched in low complexity; the sequence is PTSPGTPGVAAATQAANGGPA. The segment at 32-88 is disordered; that stretch reads PTSPGTPGVAAATQAANGGPATPAPPPLGAAPTGDPKPKKNKKPKNPTPPRPAGDNA. N-linked (GlcNAc...) asparagine; by host glycans are attached at residues N87 and N141. Cystine bridges form between C116–C573, C133–C529, C207–C271, C364–C412, and C596–C633. Involved in fusion and/or binding to host membrane regions lie at residues 173–179 and 258–265; these read VWFGHRY and RVEAFHRY. 2 N-linked (GlcNAc...) asparagine; by host glycosylation sites follow: N398 and N430. Residues 470-492 form a disordered region; the sequence is REQSRKPPNPTPPPPGASANASV. The span at 476 to 485 shows a compositional bias: pro residues; the sequence is PPNPTPPPPG. An N-linked (GlcNAc...) asparagine; by host glycan is attached at N489. N-linked (GlcNAc...) asparagine; by host glycosylation occurs at N674. The tract at residues 719 to 772 is hydrophobic membrane proximal region; sequence IDTVIHADANAAMFAGLGAFFEGMGDLGRAVGKVVMGIVGGVVSAVSGVSSFMS. A helical membrane pass occupies residues 775–795; it reads FGALAVGLLVLAGLAAAFFAF. Residues 796-904 lie on the Intravirion side of the membrane; that stretch reads RYVMRLQSNP…KDGDADEDDL (109 aa). The Golgi targeting motif lies at 849-852; it reads YMAL. Residues 883-904 are disordered; the sequence is KRRNTNYTQVPNKDGDADEDDL. T887 is subject to Phosphothreonine; by host. The Internalization motif motif lies at 889-892; the sequence is YTQV.

It belongs to the herpesviridae glycoprotein B family. In terms of assembly, homotrimer; disulfide-linked. Interacts with host receptor MYH9/NMMHC-IIA. Interacts with host receptor MYH10/NMMHC-IIB. Binds to heparan sulfate proteoglycans. Interacts with gH/gL heterodimer. Interacts with the host coreceptor PILRA. In terms of processing, the cytoplasmic tail is phosphorylated by the viral kinase US3. Phosphorylation may be linked to a down-regulation of gB expression on cell surface. Post-translationally, ubiquitinated.

Its subcellular location is the virion membrane. The protein localises to the host cell membrane. It is found in the host endosome membrane. It localises to the host Golgi apparatus membrane. Its function is as follows. Envelope glycoprotein that forms spikes at the surface of virion envelope and binds to the host cell entry receptors MYH9/NMMHC-IIA and MYH10/NMMHC-IIB, promoting the virus entry into host cells. Essential for the initial attachment to heparan sulfate moieties of the host cell surface proteoglycans. Involved in fusion of viral and cellular membranes leading to virus entry into the host cell: following initial binding to its host cell entry receptors, membrane fusion is mediated by the fusion machinery composed at least of gB and the heterodimer gH/gL. May be involved in the fusion between the virion envelope and the outer nuclear membrane during virion egress. Also plays a role, together with gK, in virus-induced cell-to-cell fusion (syncytia formation). In Human herpesvirus 1 (strain KOS) (HHV-1), this protein is Envelope glycoprotein B.